Reading from the N-terminus, the 316-residue chain is RING finger protein 148 (316 aa).

Residues 1–12 (MLLCVSCLSVNG) form the signal peptide. Residue asparagine 56 is glycosylated (N-linked (GlcNAc...) asparagine). In terms of domain architecture, PA spans 84-178 (VSGAVVLPEG…GNLKGMELLH (95 aa)). 2 helical membrane-spanning segments follow: residues 173-193 (GMEL…IEVG) and 204-224 (VMSL…YCAW). The RING-type; atypical zinc finger occupies 269–310 (CVVCFDMYKAQDVIRILTCKHFFHKTCIDPWLLAHRTCPMCK).

It localises to the membrane. The chain is RING finger protein 148 (Rnf148) from Mus musculus (Mouse).